An 812-amino-acid polypeptide reads, in one-letter code: Toll-like receptor 10 (812 aa).

A signal peptide spans 1-19 (MRYIRSIYIFCSIVTSVRS). Over 20 to 577 (GASELPEERE…VHLPEISCNT (558 aa)) the chain is Extracellular. LRR repeat units lie at residues 24-46 (LPEE…PEGL), 49-70 (ITTT…DFRS), 73-94 (KLKV…TFEF), 97-118 (ELSY…SLAG), and 119-139 (LRHL…VETG). Residue Asn33 is glycosylated (N-linked (GlcNAc...) asparagine). Asn140 carries N-linked (GlcNAc...) asparagine glycosylation. One copy of the LRR 6 repeat lies at 143–166 (HLETLGLSGAKIQKSDFQKIAHLQ). An N-linked (GlcNAc...) asparagine glycan is attached at Asn189. 4 LRR repeats span residues 296 to 321 (SNTV…ESIY), 325 to 348 (TKMD…PMYP), 350 to 373 (RFQY…IQLP), and 374 to 395 (HLKT…SHFA). N-linked (GlcNAc...) asparagine glycosylation occurs at Asn331. N-linked (GlcNAc...) asparagine glycosylation is present at Asn397. LRR repeat units follow at residues 399 to 420 (SLRH…NCLW), 423 to 443 (TLVT…GCLP), 445 to 467 (NIQI…THLT), 468 to 489 (SLRE…SHFR), and 490 to 510 (RLLV…DFFQ). N-linked (GlcNAc...) asparagine glycosylation is present at Asn428. Residues 523-577 (NPFRCTCELRDFIQLGKYSEGMMVGWSDSYICEYPLNLKGTQLKDVHLPEISCNT) form the LRRCT domain. The helical transmembrane segment at 578 to 598 (GLLIVTIVVVMLVLGMAVAFC) threads the bilayer. Over 599–812 (CLHFDLPWYL…AISLIRTDCL (214 aa)) the chain is Cytoplasmic. Residues 633 to 776 (VQFHVFISYS…LFWANLRAAL (144 aa)) enclose the TIR domain.

The protein belongs to the Toll-like receptor family. In terms of assembly, binds MYD88 via their respective TIR domains.

Its subcellular location is the membrane. In terms of biological role, participates in the innate immune response to microbial agents. Acts via MYD88 and TRAF6, leading to NF-kappa-B activation, cytokine secretion and the inflammatory response. The chain is Toll-like receptor 10 (TLR10) from Bos taurus (Bovine).